Consider the following 268-residue polypeptide: Protein MSS18 (268 aa).

To baculovirus occlusion-derived virus envelope protein E27 (ODV-E27).

It localises to the mitochondrion. Involved in splicing of intron aI5-beta of the mitochondrial COX1 transcript. This Saccharomyces cerevisiae (strain ATCC 204508 / S288c) (Baker's yeast) protein is Protein MSS18 (MSS18).